The sequence spans 355 residues: Protein RecA (355 aa).

67-74 (GPESSGKT) serves as a coordination point for ATP.

It belongs to the RecA family.

The protein localises to the cytoplasm. Can catalyze the hydrolysis of ATP in the presence of single-stranded DNA, the ATP-dependent uptake of single-stranded DNA by duplex DNA, and the ATP-dependent hybridization of homologous single-stranded DNAs. It interacts with LexA causing its activation and leading to its autocatalytic cleavage. This chain is Protein RecA, found in Histophilus somni (strain 2336) (Haemophilus somnus).